The chain runs to 245 residues: tRNA1(Val) (adenine(37)-N6)-methyltransferase (245 aa).

The protein belongs to the methyltransferase superfamily. tRNA (adenine-N(6)-)-methyltransferase family.

It is found in the cytoplasm. It carries out the reaction adenosine(37) in tRNA1(Val) + S-adenosyl-L-methionine = N(6)-methyladenosine(37) in tRNA1(Val) + S-adenosyl-L-homocysteine + H(+). In terms of biological role, specifically methylates the adenine in position 37 of tRNA(1)(Val) (anticodon cmo5UAC). The chain is tRNA1(Val) (adenine(37)-N6)-methyltransferase from Enterobacter sp. (strain 638).